A 478-amino-acid polypeptide reads, in one-letter code: Muscarinic acetylcholine receptor M4 (478 aa).

The Extracellular portion of the chain corresponds to 1–30 (MXNFTPVNGSSANQSVRLVTAAHNHLETVE). N-linked (GlcNAc...) asparagine glycosylation is found at N8 and N13. Residues 31-53 (MVFIATVTGSLSLVTVVGNILVM) traverse the membrane as a helical segment. Topologically, residues 54–67 (LSIKVNRQLQTVNN) are cytoplasmic. The chain crosses the membrane as a helical span at residues 68-88 (YFLFSLGCADLIIGAFSMNLY). At 89 to 105 (TLYIIKGYWPLGAVVCD) the chain is on the extracellular side. Cysteines 104 and 184 form a disulfide. Residues 106-127 (LWLALDYVVSNASVMNLLIISF) form a helical membrane-spanning segment. Residues 128–147 (DRYFCVTKPLTYPARRTTKM) are Cytoplasmic-facing. The helical transmembrane segment at 148–170 (AGLMIAAAWVLSFVLWAPAILFW) threads the bilayer. Residues 171–192 (QFVVGKRTVPDNQCFIQFLSNP) are Extracellular-facing. The chain crosses the membrane as a helical span at residues 193–215 (AVTFGTAIAAFYLPVVIMTVLYI). Over 216–400 (HISLASRSRV…AARERKVTRT (185 aa)) the chain is Cytoplasmic. The interval 271 to 333 (LEEAPPPALP…APTLQPRTLN (63 aa)) is disordered. Over residues 274-285 (APPPALPPPPRP) the composition is skewed to pro residues. Residues 293–303 (NESSSGSATQN) are compositionally biased toward polar residues. The segment covering 310 to 332 (TELSTAEATTPALPAPTLQPRTL) has biased composition (low complexity). A helical transmembrane segment spans residues 401-421 (IFAILLAFILTWTPYNVMVLV). At 422 to 435 (NTFCQSCIPERVWS) the chain is on the extracellular side. The chain crosses the membrane as a helical span at residues 436-455 (IGYWLCYVNSTINPACYALC). The Cytoplasmic portion of the chain corresponds to 456–478 (NATFKKTFRHLLLCQYRNIGTAR). Phosphothreonine occurs at positions 458, 462, and 476.

This sequence belongs to the G-protein coupled receptor 1 family. Muscarinic acetylcholine receptor subfamily. CHRM4 sub-subfamily.

The protein localises to the cell membrane. It localises to the postsynaptic cell membrane. Functionally, the muscarinic acetylcholine receptor mediates various cellular responses, including inhibition of adenylate cyclase, breakdown of phosphoinositides and modulation of potassium channels through the action of G proteins. Primary transducing effect is inhibition of adenylate cyclase. The polypeptide is Muscarinic acetylcholine receptor M4 (Chrm4) (Rattus norvegicus (Rat)).